Here is a 160-residue protein sequence, read N- to C-terminus: Small ribosomal subunit protein uS7 (160 aa).

This sequence belongs to the universal ribosomal protein uS7 family. As to quaternary structure, part of the 30S ribosomal subunit. Contacts proteins S9 and S11.

In terms of biological role, one of the primary rRNA binding proteins, it binds directly to 16S rRNA where it nucleates assembly of the head domain of the 30S subunit. Is located at the subunit interface close to the decoding center, probably blocks exit of the E-site tRNA. This is Small ribosomal subunit protein uS7 from Ehrlichia ruminantium (strain Gardel).